The following is a 132-amino-acid chain: Small ribosomal subunit protein uS8c (132 aa).

This sequence belongs to the universal ribosomal protein uS8 family. Part of the 30S ribosomal subunit.

It localises to the plastid. Its subcellular location is the chloroplast. In terms of biological role, one of the primary rRNA binding proteins, it binds directly to 16S rRNA central domain where it helps coordinate assembly of the platform of the 30S subunit. This is Small ribosomal subunit protein uS8c (rps8) from Rhodomonas salina (Cryptomonas salina).